Here is a 296-residue protein sequence, read N- to C-terminus: Protease HtpX homolog (296 aa).

2 helical membrane-spanning segments follow: residues 7-27 (TVLLLGVLTGLFLAIGHLVAG) and 29-49 (QGMIIAFVVALFMNFFSYFFS). Residue His131 participates in Zn(2+) binding. Glu132 is an active-site residue. His135 lines the Zn(2+) pocket. A run of 2 helical transmembrane segments spans residues 141–161 (ILISSIAATIGGAISMLANMA) and 178–198 (IASIIGSIILFIVAPLAATLI). Glu207 serves as a coordination point for Zn(2+).

It belongs to the peptidase M48B family. It depends on Zn(2+) as a cofactor.

It is found in the cell inner membrane. This Sulfurihydrogenibium sp. (strain YO3AOP1) protein is Protease HtpX homolog.